The following is a 72-amino-acid chain: Crustacean hyperglycemic hormone (72 aa).

Disulfide bonds link cysteine 7–cysteine 43, cysteine 23–cysteine 39, and cysteine 26–cysteine 52. Valine 72 is modified (valine amide).

It is found in the secreted. Functionally, hormone found in the sinus gland of isopods and decapods which controls the blood sugar level. Has a secretagogue action over the amylase released from the midgut gland. May act as a stress hormone and may be involved in the control of molting and reproduction. The chain is Crustacean hyperglycemic hormone from Penaeus schmitti (White shrimp).